Reading from the N-terminus, the 132-residue chain is SH2 domain-containing protein 1B2 (132 aa).

The SH2 domain maps to 5–101; it reads YYHGCLTKRE…GMVVHLSNPI (97 aa).

As to quaternary structure, interacts with SLAMF1 (phosphorylated). Interacts with CD244. Interacts with Src kinases HCK, LYN, FYN, FGR and LCK (via kinase domains). Expressed in spleen. Expressed in macrophages, CD8(+) T-Cells and NK cells. Conflictingly found only in NK cells.

It localises to the cytoplasm. In terms of biological role, cytoplasmic adapter regulating receptors of the signaling lymphocytic activation molecule (SLAM) family. In SLAM signaling may cooperate with Sh2d1a/SAP. Plays a role in regulation of effector functions of natural killer (NK) cells by controlling signal transduction through Cd244/2b4. However, conflicting results are reported which may reflect the use of different strain backgrounds. Proposed to act as an inhibitor of Cd244-mediated NK cell function including cytotoxicity and IFN-gamma production, the latter found also by triggering Klra4 and Klrk1 next to Cd244. Seems to positively regulate Cd244- and Cd84-dependent NK cell functions implicating Cd244-mediated phosphorylation of Vav1. The protein is SH2 domain-containing protein 1B2 (Sh2d1b2) of Mus musculus (Mouse).